A 405-amino-acid chain; its full sequence is Double C2-like domain-containing protein alpha (405 aa).

An interaction with UNC13D and DYNLT1 region spans residues 1 to 94 (MRGRRGDRMT…DSYDSDDTTA (94 aa)). The interval 34–54 (DYFPRRGPGPEGGGGGGGTGC) is disordered. Over residues 42 to 54 (GPEGGGGGGGTGC) the composition is skewed to gly residues. 2 C2 domains span residues 94-216 (ALGT…HFNI) and 256-389 (ERGR…ERWH). Asp125, Asp131, Asp186, Asp188, Asp287, Asp293, Asp347, Asp349, and Asp355 together coordinate Ca(2+). The interval 220 to 405 (RQVPLPSPSS…PPAAGAYPLA (186 aa)) is interaction with UNC13D.

In terms of assembly, interacts (via N-terminus) with UNC13A. Interacts with cytoplasmic dynein light chain DYNLT1. Interacts with UNC13D. Ca(2+) is required as a cofactor. Brain and mast cells.

The protein localises to the cytoplasmic vesicle. It localises to the secretory vesicle. Its subcellular location is the synaptic vesicle membrane. The protein resides in the synapse. It is found in the synaptosome. The protein localises to the lysosome. Functionally, calcium sensor which most probably regulates fusion of vesicles with membranes. Binds calcium and phospholipids. May be involved in calcium dependent neurotransmitter release through the interaction with UNC13A. May be involved in calcium-dependent spontaneous release of neurotransmitter in absence of action potentials in neuronal cells. Regulates Ca(2+)-dependent secretory lysosome exocytosis in mast cells. This is Double C2-like domain-containing protein alpha (Doc2a) from Mus musculus (Mouse).